The chain runs to 72 residues: Translation initiation factor IF-1 1 (72 aa).

In terms of domain architecture, S1-like spans 1–72 (MAKEDRIEMQ…SRARIIFRAK (72 aa)).

Belongs to the IF-1 family. As to quaternary structure, component of the 30S ribosomal translation pre-initiation complex which assembles on the 30S ribosome in the order IF-2 and IF-3, IF-1 and N-formylmethionyl-tRNA(fMet); mRNA recruitment can occur at any time during PIC assembly.

It is found in the cytoplasm. In terms of biological role, one of the essential components for the initiation of protein synthesis. Stabilizes the binding of IF-2 and IF-3 on the 30S subunit to which N-formylmethionyl-tRNA(fMet) subsequently binds. Helps modulate mRNA selection, yielding the 30S pre-initiation complex (PIC). Upon addition of the 50S ribosomal subunit IF-1, IF-2 and IF-3 are released leaving the mature 70S translation initiation complex. This chain is Translation initiation factor IF-1 1, found in Methylobacillus flagellatus (strain ATCC 51484 / DSM 6875 / VKM B-1610 / KT).